A 200-amino-acid chain; its full sequence is Potassium-transporting ATPase KdpC subunit (200 aa).

Residues 6–26 (PAVVLLILLTLITGIAYPLLT) traverse the membrane as a helical segment.

This sequence belongs to the KdpC family. In terms of assembly, the system is composed of three essential subunits: KdpA, KdpB and KdpC.

Its subcellular location is the cell inner membrane. Part of the high-affinity ATP-driven potassium transport (or Kdp) system, which catalyzes the hydrolysis of ATP coupled with the electrogenic transport of potassium into the cytoplasm. This subunit acts as a catalytic chaperone that increases the ATP-binding affinity of the ATP-hydrolyzing subunit KdpB by the formation of a transient KdpB/KdpC/ATP ternary complex. This is Potassium-transporting ATPase KdpC subunit from Yersinia enterocolitica serotype O:8 / biotype 1B (strain NCTC 13174 / 8081).